The sequence spans 64 residues: Disintegrin VB7B (64 aa).

The Disintegrin domain occupies 1-64; it reads ELLQNSGNPC…TGISSDCPRN (64 aa). 4 disulfide bridges follow: cysteine 10-cysteine 33, cysteine 24-cysteine 30, cysteine 29-cysteine 54, and cysteine 42-cysteine 61. The Cell attachment site; atypical (KGD) signature appears at 46–48; that stretch reads KGD.

This sequence belongs to the venom metalloproteinase (M12B) family. P-II subfamily. P-IIe sub-subfamily. Heterodimer with VB7A; disulfide-linked. In terms of tissue distribution, expressed by the venom gland.

The protein resides in the secreted. Functionally, poor inhibitor of platelet aggregation. The disintegrin inhibits the adhesion of cells expressing the RGD-dependent integrin alpha-5/beta-1 (ITGA5/ITGB1) to immobilized fibronectin. Inhibition on alpha-IIb/beta-3 (ITGA2B/ITGB3) is low. In Vipera berus berus (Common viper), this protein is Disintegrin VB7B.